We begin with the raw amino-acid sequence, 424 residues long: Hemagglutinin-esterase (424 aa).

An N-terminal signal peptide occupies residues 1 to 16 (MFLLPRFVLVSCIIGS). An esterase domain 1 region spans residues 7-127 (FVLVSCIIGS…SNDIWMQNKG (121 aa)). Residues 17–392 (LGFDNPPTNV…PICVYDPLPI (376 aa)) are Virion surface-facing. The Nucleophile role is filled by serine 40. Cysteines 44 and 65 form a disulfide. N-linked (GlcNAc...) asparagine; by host glycans are attached at residues asparagine 54, asparagine 89, asparagine 153, asparagine 236, and asparagine 301. Disulfide bonds link cysteine 113-cysteine 162, cysteine 197-cysteine 276, and cysteine 205-cysteine 249. The receptor binding stretch occupies residues 128–266 (LFYTQVYKNM…GNYLAISNEL (139 aa)). Positions 267–379 (LLTVPTKAIC…RCPTAADINT (113 aa)) are esterase domain 2. Cysteine 307 and cysteine 312 are oxidised to a cystine. N-linked (GlcNAc...) asparagine; by host glycosylation is present at asparagine 316. Active-site charge relay system residues include aspartate 326 and histidine 329. Cysteines 347 and 371 form a disulfide. The N-linked (GlcNAc...) asparagine; by host glycan is linked to asparagine 358. Residues 393-413 (IFLGILLGVAVIIIVVLLLYF) form a helical membrane-spanning segment. At 414-424 (MVDNGTRLHDA) the chain is on the intravirion side. A glycan (N-linked (GlcNAc...) asparagine; by host) is linked at asparagine 417.

It belongs to the influenza type C/coronaviruses hemagglutinin-esterase family. Homodimer; disulfide-linked. Forms a complex with the M protein in the pre-Golgi. Associates then with S-M complex to form a ternary complex S-M-HE. N-glycosylated in the host RER.

It localises to the virion membrane. Its subcellular location is the host cell membrane. It carries out the reaction N-acetyl-9-O-acetylneuraminate + H2O = N-acetylneuraminate + acetate + H(+). The catalysed reaction is N-acetyl-4-O-acetylneuraminate + H2O = N-acetylneuraminate + acetate + H(+). Structural protein that makes short spikes at the surface of the virus. Contains receptor binding and receptor-destroying activities. Mediates de-O-acetylation of N-acetyl-4-O-acetylneuraminic acid, which is probably the receptor determinant recognized by the virus on the surface of erythrocytes and susceptible cells. This receptor-destroying activity is important for virus release as it probably helps preventing self-aggregation and ensures the efficient spread of the progeny virus from cell to cell. May serve as a secondary viral attachment protein for initiating infection, the spike protein being the major one. May become a target for both the humoral and the cellular branches of the immune system. The sequence is that of Hemagglutinin-esterase from Bovine coronavirus (strain Ontario) (BCoV).